Consider the following 602-residue polypeptide: Auxin response factor 18 (602 aa).

The TF-B3 DNA-binding region spans 128-230 (FVKILTASDT…DLRVGVRRLA (103 aa)). Residues 359–396 (TSPISTPAQQPQSKCKRSRPIEPSVKTPAPPSFLYSLP) are disordered. Residues 360–371 (SPISTPAQQPQS) are compositionally biased toward polar residues. A PB1 domain is found at 489–581 (RSRTKVQMQG…EVKKMTTKLK (93 aa)).

This sequence belongs to the ARF family. In terms of assembly, homodimers and heterodimers.

The protein localises to the nucleus. Functionally, auxin response factors (ARFs) are transcriptional factors that bind specifically to the DNA sequence 5'-TGTCTC-3' found in the auxin-responsive promoter elements (AuxREs). Could act as transcriptional activator or repressor. Formation of heterodimers with Aux/IAA proteins may alter their ability to modulate early auxin response genes expression. This is Auxin response factor 18 (ARF18) from Arabidopsis thaliana (Mouse-ear cress).